Consider the following 423-residue polypeptide: Subtilisin-like protease 2 (423 aa).

A signal peptide spans 1–17 (MQLLNLGLLLLLPFVAG). Residues 18-123 (EIAPQPEPLR…VHPDQHVYLA (106 aa)) constitute a propeptide that is removed on maturation. An Inhibitor I9 domain is found at 37 to 123 (QYIVTLKEGL…VHPDQHVYLA (87 aa)). Residues 132–423 (RWGLGYMSSK…RKFTLPKNTK (292 aa)) form the Peptidase S8 domain. Residues D170 and H202 each act as charge relay system in the active site. N-linked (GlcNAc...) asparagine glycosylation is found at N249, N262, and N349. S358 acts as the Charge relay system in catalysis. N-linked (GlcNAc...) asparagine glycosylation occurs at N389.

It belongs to the peptidase S8 family.

The protein localises to the secreted. Functionally, secreted subtilisin-like serine protease with keratinolytic activity that contributes to pathogenicity. In Arthroderma otae (strain ATCC MYA-4605 / CBS 113480) (Microsporum canis), this protein is Subtilisin-like protease 2 (SUB2).